The chain runs to 771 residues: Caldesmon (771 aa).

Disordered regions lie at residues 23-91 (ERLS…ALLE) and 104-599 (LQEA…FSPK). The segment at 26-199 (SYQRNDDDEE…PKEVPTEENQ (174 aa)) is myosin and calmodulin-binding. The residue at position 27 (Tyr27) is a Phosphotyrosine. 9 stretches are compositionally biased toward basic and acidic residues: residues 47-67 (QERL…EKSE), 104-115 (LQEALERQKEFD), 139-155 (ITGK…RCEI), 170-194 (WRQD…KEVP), 203-215 (AVEK…EVVE), 240-435 (AADK…ESLP), 442-484 (SKKD…RELT), 509-518 (GSEKLKEKQQ), and 525-592 (DELK…EKKP). 10 consecutive repeat copies span residues 251–265 (EREK…RLKA), 266–278 (EEEK…KQKA), 279–291 (EEEK…RERA), 294–306 (EEEK…RERA), 309–321 (EEER…RERA), 324–336 (EEER…RAKA), 337–349 (EEER…RAKA), 350–362 (EEER…RAKA), 363–375 (EKER…RERA), and 378–390 (EEEK…KARL). The tract at residues 251-390 (EREKLEAEEK…KRAAEEKARL (140 aa)) is 10 X 13 AA approximate tandem repeats. Residues 523 to 580 (ELDELKKRREERRKILEEEEQKKKQEEAERKIREEEEKKRMKEEIERRRAEAAEKRQK) are tropomyosin-binding. Phosphoserine; by CDK1 is present on Ser597. A strong actin-binding region spans residues 612–644 (LNKSAQKSGMKPAHTTAVVSKIDSRLEQYTSAV). Residues 622 to 632 (KPAHTTAVVSK) are tropomyosin-binding. The residue at position 640 (Tyr640) is a Phosphotyrosine. Positions 674 to 680 (WEKGNVF) are calmodulin-binding. The tract at residues 676–771 (KGNVFSSPGG…NGLRQFEKEP (96 aa)) is disordered. The segment covering 679–691 (VFSSPGGTGTPNK) has biased composition (polar residues). Ser682 is modified (phosphoserine; by CDK1). Residues Thr688 and Thr711 each carry the phosphothreonine; by CDK1 modification. Ser717 carries the phosphoserine; by CDK1 modification. Positions 723 to 742 (SDLRPGDVSGKRNLWEKQSV) are enriched in basic and acidic residues. The tract at residues 726–752 (RPGDVSGKRNLWEKQSVEKPAASSSKV) is weak actin-binding.

The protein belongs to the caldesmon family. In terms of processing, phosphorylated in non-muscle cells. Phosphorylation by CDK1 during mitosis causes caldesmon to dissociate from microfilaments. Phosphorylation reduces caldesmon binding to actin, myosin, and calmodulin as well as its inhibition of actomyosin ATPase activity. Phosphorylation also occurs in both quiescent and dividing smooth muscle cells with similar effects on the interaction with actin and calmodulin and on microfilaments reorganization. In terms of tissue distribution, high-molecular-weight caldesmon (h-caldesmon) is predominantly expressed in smooth muscles, whereas low-molecular-weight caldesmon (l-caldesmon) is widely distributed in non-muscle tissues and cells. Not expressed in skeletal muscle or heart.

The protein resides in the cytoplasm. It is found in the cytoskeleton. The protein localises to the myofibril. It localises to the stress fiber. Functionally, actin- and myosin-binding protein implicated in the regulation of actomyosin interactions in smooth muscle and nonmuscle cells (could act as a bridge between myosin and actin filaments). Stimulates actin binding of tropomyosin which increases the stabilization of actin filament structure. In muscle tissues, inhibits the actomyosin ATPase by binding to F-actin. This inhibition is attenuated by calcium-calmodulin and is potentiated by tropomyosin. Interacts with actin, myosin, two molecules of tropomyosin and with calmodulin. Also plays an essential role during cellular mitosis and receptor capping. This chain is Caldesmon (CALD1), found in Gallus gallus (Chicken).